The chain runs to 792 residues: Alpha-1,6-mannosylglycoprotein 6-beta-N-acetylglucosaminyltransferase B (792 aa).

Residues 1 to 24 (MITVNPDGKIMVRRCLVTLRPFRL) lie on the Cytoplasmic side of the membrane. A helical; Signal-anchor for type II membrane protein transmembrane segment spans residues 25–45 (FVLGIGFFTLCFLMTSLGGQF). Topologically, residues 46–792 (SARRLGDSPF…GQVALCQGCL (747 aa)) are lumenal. N-linked (GlcNAc...) asparagine glycosylation is present at Asn-127. 4 cysteine pairs are disulfide-bonded: Cys-157-Cys-195, Cys-168-Cys-208, Cys-184-Cys-353, and Cys-387-Cys-644. An N-linked (GlcNAc...) asparagine glycan is attached at Asn-675. Disulfide bonds link Cys-700-Cys-775, Cys-704-Cys-777, Cys-711-Cys-764, Cys-732-Cys-753, and Cys-788-Cys-791.

This sequence belongs to the glycosyltransferase 18 family. The cofactor is Mn(2+). In terms of tissue distribution, present in brain (at protein level). Predominantly expressed in hippocampus, superficial layers of the brain cortex, striatum, nucleus accumbens, a subset of nuclei in the thalamus, inferior colliculus, brain stem and cerebellum.

It localises to the golgi apparatus membrane. It catalyses the reaction N(4)-{beta-D-GlcNAc-(1-&gt;2)-[beta-D-GlcNAc-(1-&gt;4)]-alpha-D-Man-(1-&gt;3)-[beta-D-GlcNAc-(1-&gt;2)-alpha-D-Man-(1-&gt;6)]-beta-D-Man-(1-&gt;4)-beta-D-GlcNAc-(1-&gt;4)-beta-D-GlcNAc}-L-asparaginyl-[protein] + UDP-N-acetyl-alpha-D-glucosamine = N(4)-{beta-D-GlcNAc-(1-&gt;2)-[beta-D-GlcNAc-(1-&gt;4)]-alpha-D-Man-(1-&gt;3)-[beta-D-GlcNAc-(1-&gt;2)-[beta-D-GlcNAc-(1-&gt;6)]-alpha-D-Man-(1-&gt;6)]-beta-D-Man-(1-&gt;4)-beta-D-GlcNAc-(1-&gt;4)-beta-D-GlcNAc}-L-asparaginyl-[protein] + UDP + H(+). It carries out the reaction 3-O-[N-acetyl-beta-D-glucosaminyl-(1-&gt;2)-alpha-D-mannosyl]-L-seryl-[protein] + UDP-N-acetyl-alpha-D-glucosamine = O(3)-{N-acetyl-beta-D-glucosaminyl-(1-&gt;2)-[N-acetyl-beta-D-glucosaminyl-(1-&gt;6)]-alpha-D-mannosyl}-L-seryl-[protein] + UDP + H(+). The catalysed reaction is 3-O-[N-acetyl-beta-D-glucosaminyl-(1-&gt;2)-alpha-D-mannosyl]-L-threonyl-[protein] + UDP-N-acetyl-alpha-D-glucosamine = O(3)-{N-acetyl-beta-D-glucosaminyl-(1-&gt;2)-[N-acetyl-beta-D-glucosaminyl-(1-&gt;6)]-alpha-D-mannosyl}-L-threonyl-[protein] + UDP + H(+). It participates in protein modification; protein glycosylation. Its function is as follows. Glycosyltransferase that acts on alpha-linked mannose of N-glycans and O-mannosyl glycans. Catalyzes the transfer of N-acetylglucosamine (GlcNAc) to the beta 1-6 linkage of the mannose residue of GlcNAc-beta1,2-Man-alpha on both the alpha1,3- and alpha1,6-linked mannose arms in the core structure of N-glycan. Also acts on the GlcNAc-beta1,2-Man-alpha1-Ser/Thr moiety, forming a 2,6-branched structure in brain O-mannosyl glycan. Plays an active role in modulating integrin and laminin-dependent adhesion and migration of neuronal cells via its activity in the O-mannosyl glycan pathway. The chain is Alpha-1,6-mannosylglycoprotein 6-beta-N-acetylglucosaminyltransferase B (Mgat5b) from Mus musculus (Mouse).